The primary structure comprises 791 residues: MSQPRPRYVVDRAAYSLTLFDDEFEKKDRTYPVGEKLRNAFRCSSAKIKAVVFGLLPVLSWLPKYKIKDYIIPDLLGGLSGGSIQVPQGMAFALLANLPAVNGLYSSFFPLLTYFFLGGVHQMVPGTFAVISILVGNICLQLAPESKFQVFNNATNESYVDTAAMEAERLHVSATLACLTAIIQMGLGFMQFGFVAIYLSESFIRGFMTAAGLQILISVLKYIFGLTIPSYTGPGSIVFTFIDICKNLPHTNIASLIFALISGAFLVLVKELNARYMHKIRFPIPTEMIVVVVATAISGGCKMPKKYHMQIVGEIQRGFPTPVSPVVSQWKDMIGTAFSLAIVSYVINLAMGRTLANKHGYDVDSNQEMIALGCSNFFGSFFKIHVICCALSVTLAVDGAGGKSQVASLCVSLVVMITMLVLGIYLYPLPKSVLGALIAVNLKNSLKQLTDPYYLWRKSKLDCCIWVVSFLSSFFLSLPYGVAVGVAFSVLVVVFQTQFRNGYALAQVMDTDIYVNPKTYNRAQDIQGIKIITYCSPLYFANSEIFRQKVIAKTGMDPQKVLLAKQKYLKKQEKRRMRPTQQRRSLFMKTKTVSLQELQQDFENAPPTDPNNNQTPANGTSVSYITFSPDSSSPAQSEPPASAEAPGEPSDMLASVPPFVTFHTLILDMSGVSFVDLMGIKALAKLSSTYGKIGVKVFLVNIHAQVYNDISHGGVFEDGSLECKHVFPSIHDAVLFAQANARDVTPGHNFQGAPGDAELSLYDSEEDIRSYWDLEQEMFGSMFHAETLTAL.

The Cytoplasmic portion of the chain corresponds to 1 to 70; it reads MSQPRPRYVV…WLPKYKIKDY (70 aa). The helical transmembrane segment at 71–96 threads the bilayer; sequence IIPDLLGGLSGGSIQVPQGMAFALLA. Residues 97 to 99 are Extracellular-facing; that stretch reads NLP. Residues 100 to 117 traverse the membrane as a helical segment; sequence AVNGLYSSFFPLLTYFFL. Residues 118-128 are Cytoplasmic-facing; the sequence is GGVHQMVPGTF. The helical transmembrane segment at 129–142 threads the bilayer; that stretch reads AVISILVGNICLQL. The Extracellular portion of the chain corresponds to 143 to 171; it reads APESKFQVFNNATNESYVDTAAMEAERLH. The chain crosses the membrane as a helical span at residues 172–190; the sequence is VSATLACLTAIIQMGLGFM. The Cytoplasmic segment spans residues 191 to 202; the sequence is QFGFVAIYLSES. The helical transmembrane segment at 203-224 threads the bilayer; it reads FIRGFMTAAGLQILISVLKYIF. Topologically, residues 225–235 are extracellular; sequence GLTIPSYTGPG. Residues 236 to 244 constitute an intramembrane region (helical); that stretch reads SIVFTFIDI. Topologically, residues 245-254 are extracellular; sequence CKNLPHTNIA. A helical membrane pass occupies residues 255 to 273; sequence SLIFALISGAFLVLVKELN. Topologically, residues 274 to 281 are cytoplasmic; it reads ARYMHKIR. Residues 282–297 form a helical membrane-spanning segment; the sequence is FPIPTEMIVVVVATAI. The Extracellular portion of the chain corresponds to 298-327; it reads SGGCKMPKKYHMQIVGEIQRGFPTPVSPVV. The helical transmembrane segment at 328–348 threads the bilayer; sequence SQWKDMIGTAFSLAIVSYVIN. Topologically, residues 349-366 are cytoplasmic; it reads LAMGRTLANKHGYDVDSN. A helical transmembrane segment spans residues 367 to 382; sequence QEMIALGCSNFFGSFF. The Extracellular segment spans residues 383–390; sequence KIHVICCA. A helical transmembrane segment spans residues 391 to 400; sequence LSVTLAVDGA. Residues 401–404 lie on the Cytoplasmic side of the membrane; it reads GGKS. Residues 405-423 form a helical membrane-spanning segment; sequence QVASLCVSLVVMITMLVLG. The Extracellular portion of the chain corresponds to 424 to 428; the sequence is IYLYP. The helical transmembrane segment at 429–450 threads the bilayer; sequence LPKSVLGALIAVNLKNSLKQLT. The Cytoplasmic segment spans residues 451–464; the sequence is DPYYLWRKSKLDCC. Residues 465–476 traverse the membrane as a helical segment; sequence IWVVSFLSSFFL. Position 477 (Ser-477) is a topological domain, extracellular. A helical transmembrane segment spans residues 478–489; sequence LPYGVAVGVAFS. Over 490–791 the chain is Cytoplasmic; it reads VLVVVFQTQF…MFHAETLTAL (302 aa). In terms of domain architecture, STAS spans 519-737; that stretch reads TYNRAQDIQG…PSIHDAVLFA (219 aa). Residues 602–650 form a disordered region; the sequence is FENAPPTDPNNNQTPANGTSVSYITFSPDSSSPAQSEPPASAEAPGEPS. Residues 610–626 show a composition bias toward polar residues; sequence PNNNQTPANGTSVSYIT. A compositionally biased stretch (low complexity) spans 628–650; that stretch reads SPDSSSPAQSEPPASAEAPGEPS.

Belongs to the SLC26A/SulP transporter (TC 2.A.53) family. In terms of assembly, homodimer. In terms of tissue distribution, predominantly expressed in lung at the luminal side of the bronchiolar and alveolar epithelium of lung. To a lower extent, also expressed in pancreas and prostate.

Its subcellular location is the cell membrane. It localises to the endomembrane system. The enzyme catalyses chloride(in) = chloride(out). It carries out the reaction hydrogencarbonate(in) + chloride(out) = hydrogencarbonate(out) + chloride(in). Its activity is regulated as follows. Inhibited by ammonium and thiosulfate. Its function is as follows. Ion transporter that can act both as an ion channel and anion exchanger. Mainly acts as a chloride channel, which mediate uncoupled chloride anion transport in an alternate-access mechanism where a saturable binding site is alternately exposed to either one or the other side of the membrane. Also acts as a DIDS- and thiosulfate- sensitive anion exchanger the exchange of chloride for bicarbonate ions across the cell membrane. The protein is Solute carrier family 26 member 9 of Homo sapiens (Human).